A 55-amino-acid chain; its full sequence is Large ribosomal subunit protein bL32c (55 aa).

Residues 1-24 are disordered; the sequence is MAVPKKRTSKSKKNARKANWKRKG.

The protein belongs to the bacterial ribosomal protein bL32 family.

It is found in the plastid. Its subcellular location is the chloroplast. This is Large ribosomal subunit protein bL32c from Phaeodactylum tricornutum (strain CCAP 1055/1).